Here is a 210-residue protein sequence, read N- to C-terminus: Redox-sensing transcriptional repressor Rex (210 aa).

The segment at residues 17–56 (KYHRYLYELLKNDVDRISSKELSEKIGFTASQIRQDLNCF) is a DNA-binding region (H-T-H motif). Position 91-96 (91-96 (GAGNIG)) interacts with NAD(+).

Belongs to the transcriptional regulatory Rex family. In terms of assembly, homodimer.

It localises to the cytoplasm. In terms of biological role, modulates transcription in response to changes in cellular NADH/NAD(+) redox state. The sequence is that of Redox-sensing transcriptional repressor Rex from Clostridium botulinum (strain Loch Maree / Type A3).